The primary structure comprises 1035 residues: Isoleucine--tRNA ligase (1035 aa).

A 'HIGH' region motif is present at residues 48–58; it reads PTANGRPHVGH. The 'KMSKS' region signature appears at 589-593; the sequence is KMSKH. Position 592 (Lys592) interacts with ATP.

It belongs to the class-I aminoacyl-tRNA synthetase family. IleS type 2 subfamily. Monomer. Requires Zn(2+) as cofactor.

It localises to the cytoplasm. The catalysed reaction is tRNA(Ile) + L-isoleucine + ATP = L-isoleucyl-tRNA(Ile) + AMP + diphosphate. In terms of biological role, catalyzes the attachment of isoleucine to tRNA(Ile). As IleRS can inadvertently accommodate and process structurally similar amino acids such as valine, to avoid such errors it has two additional distinct tRNA(Ile)-dependent editing activities. One activity is designated as 'pretransfer' editing and involves the hydrolysis of activated Val-AMP. The other activity is designated 'posttransfer' editing and involves deacylation of mischarged Val-tRNA(Ile). The chain is Isoleucine--tRNA ligase from Clostridium acetobutylicum (strain ATCC 824 / DSM 792 / JCM 1419 / IAM 19013 / LMG 5710 / NBRC 13948 / NRRL B-527 / VKM B-1787 / 2291 / W).